The primary structure comprises 78 residues: Acyl carrier protein (78 aa).

The Carrier domain occupies 2-77 (SEIAQKVKSI…QAIAYLEQHV (76 aa)). Ser37 bears the O-(pantetheine 4'-phosphoryl)serine mark.

This sequence belongs to the acyl carrier protein (ACP) family. Post-translationally, 4'-phosphopantetheine is transferred from CoA to a specific serine of apo-ACP by AcpS. This modification is essential for activity because fatty acids are bound in thioester linkage to the sulfhydryl of the prosthetic group.

The protein localises to the cytoplasm. It participates in lipid metabolism; fatty acid biosynthesis. Functionally, carrier of the growing fatty acid chain in fatty acid biosynthesis. This chain is Acyl carrier protein, found in Cytophaga hutchinsonii (strain ATCC 33406 / DSM 1761 / CIP 103989 / NBRC 15051 / NCIMB 9469 / D465).